A 179-amino-acid chain; its full sequence is Large ribosomal subunit protein uL5 (179 aa).

Belongs to the universal ribosomal protein uL5 family. As to quaternary structure, part of the 50S ribosomal subunit; part of the 5S rRNA/L5/L18/L25 subcomplex. Contacts the 5S rRNA and the P site tRNA. Forms a bridge to the 30S subunit in the 70S ribosome.

This is one of the proteins that bind and probably mediate the attachment of the 5S RNA into the large ribosomal subunit, where it forms part of the central protuberance. In the 70S ribosome it contacts protein S13 of the 30S subunit (bridge B1b), connecting the 2 subunits; this bridge is implicated in subunit movement. Contacts the P site tRNA; the 5S rRNA and some of its associated proteins might help stabilize positioning of ribosome-bound tRNAs. The chain is Large ribosomal subunit protein uL5 from Marinobacter nauticus (strain ATCC 700491 / DSM 11845 / VT8) (Marinobacter aquaeolei).